Consider the following 198-residue polypeptide: Probable GTP-binding protein EngB (198 aa).

The region spanning 21 to 195 is the EngB-type G domain; sequence NIPEVCFVGR…YDALIRLLEV (175 aa). GTP contacts are provided by residues 29 to 36, 56 to 60, 75 to 78, 142 to 145, and 174 to 176; these read GRSNVGKS, GKTRL, DAPG, TKLD, and VSN. The Mg(2+) site is built by Ser-36 and Thr-58.

It belongs to the TRAFAC class TrmE-Era-EngA-EngB-Septin-like GTPase superfamily. EngB GTPase family. It depends on Mg(2+) as a cofactor.

Necessary for normal cell division and for the maintenance of normal septation. This Mesoplasma florum (strain ATCC 33453 / NBRC 100688 / NCTC 11704 / L1) (Acholeplasma florum) protein is Probable GTP-binding protein EngB.